Here is a 264-residue protein sequence, read N- to C-terminus: MNVSVNIEHVTKEYRIYRNNKERLKDVIVPFHKNKTFYALNDLSLTAYEGDVIGLVGINGSGKSTLSNMIGGSLSPTEGDIKRDGDVSVIAINAGLNGQLTGIENIEFKMLCMGFTRKQIKKLTPEIIEFSELGEFIYQPVKKYSSGMRAKLGFSINITTNPDILVIDEALSVGDQTFAQKCLDKIFEYKEQGKTIFFVSHNMKQVREFCTKIAWIEAGKLKQFGELDDVLPEYEKFLNDFKKRSKGEQKKFRNDLDSSRFVVK.

One can recognise an ABC transporter domain in the interval 22-243; it reads ERLKDVIVPF…YEKFLNDFKK (222 aa). 57 to 64 contacts ATP; it reads GINGSGKS.

It belongs to the ABC transporter superfamily. Teichoic acids exporter (TC 3.A.1.104.1) family. The complex is composed of two ATP-binding proteins (TagH) and two transmembrane proteins (TagG).

Its subcellular location is the cell membrane. The catalysed reaction is ATP + H2O + teichoic acidSide 1 = ADP + phosphate + teichoic acidSide 2.. In terms of biological role, part of the ABC transporter complex TagGH involved in teichoic acids export. Responsible for energy coupling to the transport system. The polypeptide is Teichoic acids export ATP-binding protein TagH (Staphylococcus saprophyticus subsp. saprophyticus (strain ATCC 15305 / DSM 20229 / NCIMB 8711 / NCTC 7292 / S-41)).